The following is a 734-amino-acid chain: Origin of replication complex subunit 3 (734 aa).

2 disordered regions span residues 1–25 (MAPSGTVADPPQCSTTDSFNSSDTA) and 532–554 (GQRQGLPNSPKKHASRSNSKLEK). A compositionally biased stretch (polar residues) spans 12 to 24 (QCSTTDSFNSSDT).

The protein belongs to the ORC3 family. As to quaternary structure, component of the origin recognition complex (ORC) composed of at least ORC1 (ORC1A or ORC1B), ORC2, ORC3, ORC4, ORC5 and ORC6. ORC is regulated in a cell-cycle and development dependent manner. It is sequentially assembled at the exit from anaphase of mitosis and disassembled as cells enter S phase. Interacts directly with ORC1A, ORC2, ORC4, ORC5 and ORC6. In terms of tissue distribution, follow a cell-cycle regulation with a peak at the G1/S-phase. Mostly expressed in siliques and flowers, and, to a lower exent, in flower buds, leaves, roots and stems.

Its subcellular location is the nucleus. Component of the origin recognition complex (ORC) that binds origins of replication. DNA-binding is ATP-dependent. The specific DNA sequences that define origins of replication have not been identified yet. The sequence is that of Origin of replication complex subunit 3 from Arabidopsis thaliana (Mouse-ear cress).